We begin with the raw amino-acid sequence, 272 residues long: NH(3)-dependent NAD(+) synthetase (272 aa).

45–52 (GISGGQDS) contacts ATP. Mg(2+) is bound at residue Asp-51. Arg-138 serves as a coordination point for deamido-NAD(+). ATP is bound at residue Thr-158. Glu-163 serves as a coordination point for Mg(2+). 2 residues coordinate deamido-NAD(+): Lys-171 and Asp-178. ATP-binding residues include Lys-187 and Thr-209. 258-259 (HK) contacts deamido-NAD(+).

The protein belongs to the NAD synthetase family. As to quaternary structure, homodimer.

The catalysed reaction is deamido-NAD(+) + NH4(+) + ATP = AMP + diphosphate + NAD(+) + H(+). It functions in the pathway cofactor biosynthesis; NAD(+) biosynthesis; NAD(+) from deamido-NAD(+) (ammonia route): step 1/1. Its function is as follows. Catalyzes the ATP-dependent amidation of deamido-NAD to form NAD. Uses ammonia as a nitrogen source. This Bacillus velezensis (strain DSM 23117 / BGSC 10A6 / LMG 26770 / FZB42) (Bacillus amyloliquefaciens subsp. plantarum) protein is NH(3)-dependent NAD(+) synthetase.